Consider the following 75-residue polypeptide: CDC42 small effector protein 2-C (75 aa).

S-palmitoyl cysteine attachment occurs at residues cysteine 10 and cysteine 11. In terms of domain architecture, CRIB spans 29–42; the sequence is IGEPMNFVHTAHVG.

The protein belongs to the CDC42SE/SPEC family.

The protein resides in the cytoplasm. It localises to the cytoskeleton. The protein localises to the cell membrane. In terms of biological role, probably involved in the organization of the actin cytoskeleton by acting downstream of CDC42, inducing actin filament assembly. The polypeptide is CDC42 small effector protein 2-C (cdc42se2-c) (Xenopus laevis (African clawed frog)).